The following is a 416-amino-acid chain: MAIHLKASHLGVAVLLLLFGGAIGAAGGGYLLSSGQNHSSPDSPVNTSPQSLTPAPVESNYRSALPLTLPRSAQDDQELNFIARAVQKIGPAVVRIDSERTAVSQGGPMGDQPFFRRFFGEEMPPNPDPREQGTGSGFILSSDGEVLTNAHVVEGASTVKVTLKDGSVLEGKVMGIDTMTDVAVVKVEAENLPVVEIGQSDRLQPGEWAIAIGNPLGLDNTVTVGIISALGRSSSEVGVPDKRVRFIQTDAAINPGNSGGPLLNAKGEVIGVNTAIRADAQGLGFAIPIQTAQNVAENLFTKGKMEHPYLGIHMVTLTPEMTKQLRTSGELPAGVTADTGVLIIQVSPGSPAAQAGLAPGDIILEVGGMGVKTATDVQERVEVSQIGEPLAIAVKRGQKPQMMAVRPGPFPEDLGQ.

A signal peptide spans 1-25; it reads MAIHLKASHLGVAVLLLLFGGAIGA. The segment covering 35–53 has biased composition (polar residues); the sequence is GQNHSSPDSPVNTSPQSLT. The interval 35–57 is disordered; it reads GQNHSSPDSPVNTSPQSLTPAPV. A PDZ domain is found at 320–398; that stretch reads EMTKQLRTSG…PLAIAVKRGQ (79 aa).

This sequence belongs to the peptidase S1C family.

A putative protease, its function overlaps that of the related putative proteases HtrA and HhoA. The polypeptide is Putative serine protease HhoB (hhoB) (Synechocystis sp. (strain ATCC 27184 / PCC 6803 / Kazusa)).